A 549-amino-acid polypeptide reads, in one-letter code: Cobalt-dependent inorganic pyrophosphatase (549 aa).

CBS domains are found at residues 74-130 and 252-310; these read EMDK…IWDS and MTKD…VIQV. AMP-binding positions include Lys-100, 116 to 119, Thr-253, Val-258, and 278 to 280; these read STSN and YSN.

The protein belongs to the PPase family. Homodimer. Requires Co(2+) as cofactor. It depends on Mn(2+) as a cofactor. Mg(2+) is required as a cofactor.

The catalysed reaction is diphosphate + H2O = 2 phosphate + H(+). Its activity is regulated as follows. Inhibited by AMP and ADP with 25% and 35% of activity remaining, respectively, at saturating conditions. Activated 5-fold by diadenosine polyphosphates(Ap[n]A) with n&gt;2 (Ap3A, Ap4A, Ap5A, Ap6A) at saturating conditions. The polypeptide is Cobalt-dependent inorganic pyrophosphatase (Clostridium perfringens (strain 13 / Type A)).